We begin with the raw amino-acid sequence, 348 residues long: Sulfate/thiosulfate import ATP-binding protein CysA (348 aa).

Residues 3 to 237 form the ABC transporter domain; sequence IRIQELCKQF…PSSPFVYSFV (235 aa). 35–42 is an ATP binding site; that stretch reads GPSGSGKT.

It belongs to the ABC transporter superfamily. Sulfate/tungstate importer (TC 3.A.1.6) family. The complex is composed of two ATP-binding proteins (CysA), two transmembrane proteins (CysT and CysW) and a solute-binding protein (CysP).

It localises to the cell inner membrane. The catalysed reaction is sulfate(out) + ATP + H2O = sulfate(in) + ADP + phosphate + H(+). The enzyme catalyses thiosulfate(out) + ATP + H2O = thiosulfate(in) + ADP + phosphate + H(+). Part of the ABC transporter complex CysAWTP involved in sulfate/thiosulfate import. Responsible for energy coupling to the transport system. In Xylella fastidiosa (strain 9a5c), this protein is Sulfate/thiosulfate import ATP-binding protein CysA.